A 951-amino-acid chain; its full sequence is Zinc fingers and homeoboxes protein 3 (951 aa).

A disordered region spans residues methionine 1 to asparagine 66. The required for nuclear localization stretch occupies residues methionine 1–proline 107. Low complexity predominate over residues proline 42–serine 58. 2 consecutive C2H2-type zinc fingers follow at residues tyrosine 77–histidine 100 and phenylalanine 109–histidine 132. The tract at residues threonine 227 to proline 252 is disordered. Residues alanine 238–serine 483 are required for homodimerization and interaction with NFYA. Residues leucine 299–serine 497 are required for repressor activity. DNA-binding regions (homeobox) lie at residues serine 300–tryptophan 359 and alanine 489–lysine 548. The segment at tyrosine 492–serine 550 is required for nuclear localization. Serine 599 carries the phosphoserine modification. The homeobox 3 DNA-binding region spans threonine 607–glutamate 666. Positions valine 662–lysine 676 are enriched in basic and acidic residues. Residues valine 662 to glutamate 690 are disordered. The span at glutamate 677–glutamate 690 shows a compositional bias: acidic residues. Phosphoserine is present on residues serine 703 and serine 718. DNA-binding regions (homeobox) lie at residues proline 759–glutamine 818 and phenylalanine 830–valine 889. The segment at serine 916–aspartate 951 is disordered. Residues serine 919 to proline 936 are compositionally biased toward low complexity. Serine 922 and serine 941 each carry phosphoserine. Residues phenylalanine 937–aspartate 951 show a composition bias toward polar residues.

This sequence belongs to the ZHX family. In terms of assembly, homodimer (via homeobox domain 1). Heterodimer with ZHX1 (via homeobox domain 1). Heterodimer with ZHX2 (via homeobox domain 1). Heterodimerization with ZHX1 is a prerequisite for repressor activity. Interacts with NFYA. Ubiquitously expressed.

It is found in the nucleus. Acts as a transcriptional repressor. Involved in the early stages of mesenchymal stem cell (MSC) osteogenic differentiation. Is a regulator of podocyte gene expression during primary glomerula disease. Binds to promoter DNA. The polypeptide is Zinc fingers and homeoboxes protein 3 (Zhx3) (Mus musculus (Mouse)).